The primary structure comprises 311 residues: Methionyl-tRNA formyltransferase (311 aa).

112 to 115 (SLLP) contacts (6S)-5,6,7,8-tetrahydrofolate.

This sequence belongs to the Fmt family.

The enzyme catalyses L-methionyl-tRNA(fMet) + (6R)-10-formyltetrahydrofolate = N-formyl-L-methionyl-tRNA(fMet) + (6S)-5,6,7,8-tetrahydrofolate + H(+). In terms of biological role, attaches a formyl group to the free amino group of methionyl-tRNA(fMet). The formyl group appears to play a dual role in the initiator identity of N-formylmethionyl-tRNA by promoting its recognition by IF2 and preventing the misappropriation of this tRNA by the elongation apparatus. In Sinorhizobium fredii (strain NBRC 101917 / NGR234), this protein is Methionyl-tRNA formyltransferase.